The primary structure comprises 1199 residues: Transcription initiation factor TFIID subunit 2 (1199 aa).

Disordered regions lie at residues 1–23, 1067–1102, and 1136–1199; these read MPLT…FESP, RPST…TKPQ, and KEST…SLSD. Residues 1093-1102 show a composition bias toward polar residues; sequence CDSTPTTKPQ. The span at 1144 to 1171 shows a compositional bias: basic residues; sequence SDHHHHHHHEHKKKKKKHKHKHKHKHKH. A compositionally biased stretch (polar residues) spans 1182–1199; sequence TFSSPASGRSIRSPSLSD. Phosphoserine is present on residues Ser1185, Ser1188, Ser1194, Ser1196, and Ser1198.

It belongs to the TAF2 family. In terms of assembly, component of the TFIID basal transcription factor complex, composed of TATA-box-binding protein TBP, and a number of TBP-associated factors (TAFs), including TAF1, TAF2, TAF3, TAF4, TAF5, TAF6, TAF7, TAF8, TAF9, TAF10, TAF11, TAF12 and TAF13. Interacts with TAF2C1. Component of the TFTC-HAT complex. In terms of tissue distribution, expressed in all tissues tested.

The protein resides in the nucleus. Its function is as follows. The TFIID basal transcription factor complex plays a major role in the initiation of RNA polymerase II (Pol II)-dependent transcription. TFIID recognizes and binds promoters with or without a TATA box via its subunit TBP, a TATA-box-binding protein, and promotes assembly of the pre-initiation complex (PIC). The TFIID complex consists of TBP and TBP-associated factors (TAFs), including TAF1, TAF2, TAF3, TAF4, TAF5, TAF6, TAF7, TAF8, TAF9, TAF10, TAF11, TAF12 and TAF13. TAF2 forms a promoter DNA binding subcomplex of TFIID, together with TAF7 and TAF1. The polypeptide is Transcription initiation factor TFIID subunit 2 (TAF2) (Homo sapiens (Human)).